Consider the following 510-residue polypeptide: E3 ubiquitin-protein ligase TRIM7 (510 aa).

Residues 29–81 (CSICLEFFREPVSVECGHSFCRACIMRCWERPGAGTGTATRTLPCPLPCPQCR) form an RING-type zinc finger. At Ser106 the chain carries Phosphoserine; by RPS6KA5. The segment at 124 to 165 (AAAARCSQHGEQLKLYCQDDGRAICVVCDRAREHRSHAVLPL) adopts a B box-type zinc-finger fold. The Zn(2+) site is built by Cys129, His132, Cys151, and His157. Positions 165-275 (LEEAVQEAKE…SGQIQETAQK (111 aa)) form a coiled coil. The B30.2/SPRY domain maps to 323 to 510 (LLKKFKEDLQ…STGTYLRIWP (188 aa)).

This sequence belongs to the TRIM/RBCC family. In terms of assembly, forms homodimers. Interacts with GNIP2. Interacts with GYG1. Interacts with RNF187 (via C-terminus). In terms of processing, phosphorylated at Ser-106 by RPS6KA5/MSK1, which stimulates the ubiquitin ligase activity. Post-translationally, auto-ubiquitinates via 'Lys-63'-linked polyubiquitination. In terms of tissue distribution, highly expressed in antigen-presenting cells.

The protein localises to the nucleus. Its subcellular location is the cytoplasm. It localises to the golgi apparatus. The catalysed reaction is S-ubiquitinyl-[E2 ubiquitin-conjugating enzyme]-L-cysteine + [acceptor protein]-L-lysine = [E2 ubiquitin-conjugating enzyme]-L-cysteine + N(6)-ubiquitinyl-[acceptor protein]-L-lysine.. It participates in protein modification; protein ubiquitination. Functionally, E3 ubiquitin-protein ligase that have both tumor-promoting and tumor-suppressing activities and functions in several biological processes including innate immunity, regulation of ferroptosis as well as cell proliferation and migration. Acts as an antiviral effector against multiple viruses by targeting specific viral proteins for ubiquitination and degradation including norovirus NTPase protein. Mechanistically, recognizes the C-terminal glutamine-containing motif generated by viral proteases that process the polyproteins and trigger their ubiquitination and subsequent degradation. Mediates 'Lys-63'-linked polyubiquitination and stabilization of the JUN coactivator RNF187 in response to growth factor signaling via the MEK/ERK pathway, thereby regulating JUN transactivation and cellular proliferation. Promotes the TLR4-mediated signaling activation through its E3 ligase domain leading to production of pro-inflammatory cytokines and type I interferon. Also plays a negative role in the regulation of exogenous cytosolic DNA virus-triggered immune response. Mechanistically, enhances the 'Lys-48'-linked ubiquitination of STING1 leading to its proteasome-dependent degradation. Mediates the ubiquitination of the SIN3-HDAC chromatin remodeling complex component BRMS1. Modulates NCOA4-mediated ferritinophagy and ferroptosis in glioblastoma cells by ubiquitinating NCOA4, leading to its degradation. The protein is E3 ubiquitin-protein ligase TRIM7 (Trim7) of Mus musculus (Mouse).